An 89-amino-acid chain; its full sequence is MSLNAEIKAQIVADNARCANDTGSPEVQVALLTAQINHLQGHFKEHSKDHHGRRGLLRMVSQRRKLLDYLKRKDVQRYAALIAKLGLRR.

This sequence belongs to the universal ribosomal protein uS15 family. As to quaternary structure, part of the 30S ribosomal subunit. Forms a bridge to the 50S subunit in the 70S ribosome, contacting the 23S rRNA.

Its function is as follows. One of the primary rRNA binding proteins, it binds directly to 16S rRNA where it helps nucleate assembly of the platform of the 30S subunit by binding and bridging several RNA helices of the 16S rRNA. Forms an intersubunit bridge (bridge B4) with the 23S rRNA of the 50S subunit in the ribosome. In Aeromonas hydrophila subsp. hydrophila (strain ATCC 7966 / DSM 30187 / BCRC 13018 / CCUG 14551 / JCM 1027 / KCTC 2358 / NCIMB 9240 / NCTC 8049), this protein is Small ribosomal subunit protein uS15.